Here is a 110-residue protein sequence, read N- to C-terminus: Late cornified envelope protein 1A (110 aa).

Residues 1–10 (MSCQQSQQQC) show a composition bias toward low complexity. Disordered stretches follow at residues 1–23 (MSCQ…CPPK) and 83–110 (QSSG…GGCC). Pro residues predominate over residues 11 to 23 (QPPPKCTPKCPPK). Low complexity predominate over residues 83 to 95 (QSSGCCSQPSGGS). The span at 96–110 (SCCGGDSGQHSGGCC) shows a compositional bias: gly residues.

It belongs to the LCE family. As to quaternary structure, interacts with CYSRT1. Skin-specific. Expression was readily detected in adult trunk skin, adult arm skin, fetal skin, penal skin, vulva, esophagus and tongue. Not expressed in the cervix, rectum, lung, colon, or placenta.

Its function is as follows. Precursors of the cornified envelope of the stratum corneum. The sequence is that of Late cornified envelope protein 1A (LCE1A) from Homo sapiens (Human).